Consider the following 233-residue polypeptide: Demethylmenaquinone methyltransferase (233 aa).

S-adenosyl-L-methionine-binding positions include threonine 58, aspartate 79, and 106–107 (NA).

Belongs to the class I-like SAM-binding methyltransferase superfamily. MenG/UbiE family.

It carries out the reaction a 2-demethylmenaquinol + S-adenosyl-L-methionine = a menaquinol + S-adenosyl-L-homocysteine + H(+). The protein operates within quinol/quinone metabolism; menaquinone biosynthesis; menaquinol from 1,4-dihydroxy-2-naphthoate: step 2/2. Its function is as follows. Methyltransferase required for the conversion of demethylmenaquinol (DMKH2) to menaquinol (MKH2). The polypeptide is Demethylmenaquinone methyltransferase (Bacillus velezensis (strain DSM 23117 / BGSC 10A6 / LMG 26770 / FZB42) (Bacillus amyloliquefaciens subsp. plantarum)).